Here is a 427-residue protein sequence, read N- to C-terminus: MAATDVERVSNEEKRSLAMTGHVGFDSLPDQLVSKSVTQGFCFNILCVGETGIGKSTLMNTLFNTTFETEEASHYENGVRLRPRTYDLQESNVHLKLTIVDTVGFGDQINKDDSYRSVVDYIDTQFENYLQEELKIRRSLFNYHDSRIHVCLYFITPTGHSLKSLDLVTMKKLDSKVNIIPIIAKADTISKSELHKFKIKIMSELVSNGVQIYQFPTDDDAVAEINSVMNAHLPFAVVGSTEEVKVGNKLVRARQYPWGVVQVENESHCDFVKLREMLIRVNMEDLREQTHTRHYELYRRCKLEEMGFKDNDPDTQPFSLQETYEAKRKEFLGELQRKEEEMRQMFVNKVKETEAELKDKERELQEKFMQLKRVHQEESKKVEDKRRDLEEEMNSFNRRKAAMEALQSQSFQATSQQPLKKDKDRKN.

One can recognise a Septin-type G domain in the interval 39–305 (QGFCFNILCV…ELYRRCKLEE (267 aa)). The tract at residues 49 to 56 (GETGIGKS) is G1 motif. GTP-binding positions include 49 to 56 (GETGIGKS), Gly104, 185 to 193 (KADTISKSE), Gly239, and Arg254. Residues 101–104 (DTVG) are G3 motif. The segment at 184-187 (AKAD) is G4 motif. Residues 321 to 409 (QETYEAKRKE…KAAMEALQSQ (89 aa)) are a coiled coil. Positions 373-427 (RVHQEESKKVEDKRRDLEEEMNSFNRRKAAMEALQSQSFQATSQQPLKKDKDRKN) are disordered. Basic and acidic residues predominate over residues 374-389 (VHQEESKKVEDKRRDL). Over residues 406–418 (LQSQSFQATSQQP) the composition is skewed to polar residues.

This sequence belongs to the TRAFAC class TrmE-Era-EngA-EngB-Septin-like GTPase superfamily. Septin GTPase family.

The protein resides in the cytoplasm. It is found in the cytoskeleton. Its subcellular location is the synapse. The protein localises to the cell projection. It localises to the axon. The protein resides in the cytoplasmic vesicle. It is found in the secretory vesicle. Its subcellular location is the synaptic vesicle membrane. The protein localises to the presynapse. In Xenopus tropicalis (Western clawed frog), this protein is Septin-8.